The following is a 234-amino-acid chain: Small ribosomal subunit protein uS2 (234 aa).

It belongs to the universal ribosomal protein uS2 family.

The protein is Small ribosomal subunit protein uS2 of Prochlorococcus marinus subsp. pastoris (strain CCMP1986 / NIES-2087 / MED4).